Consider the following 315-residue polypeptide: Zinc metalloproteinase nas-4 (315 aa).

Residues 1 to 20 form the signal peptide; it reads MMTIQRYSLVFCAIFATCWT. N-linked (GlcNAc...) asparagine glycosylation occurs at Asn71. Residues 95–290 form the Peptidase M12A domain; it reads NAIKQIYRRW…RKINKLYNCP (196 aa). Intrachain disulfides connect Cys137-Cys289 and Cys160-Cys179. Residue His187 coordinates Zn(2+). Residue Glu188 is part of the active site. Zn(2+) contacts are provided by His191 and His197. Residues 291–315 form a disordered region; that stretch reads GVSGNNNNNNNNQINSNSIVNHPQV.

Zn(2+) is required as a cofactor. Digestive tract. Found in the pharynx cells of the procorpus, metacorpus, isthmus and terminal bulb, and in the terminal bulb lumen.

Its subcellular location is the secreted. In terms of biological role, metalloprotease. May be involved in digestion. This chain is Zinc metalloproteinase nas-4 (nas-4), found in Caenorhabditis elegans.